Consider the following 491-residue polypeptide: Protein nucleotidyltransferase YdiU (491 aa).

Residues Gly-94, Gly-96, Arg-97, Lys-117, Asp-129, Gly-130, Arg-180, and Arg-187 each coordinate ATP. The active-site Proton acceptor is Asp-256. Mg(2+) is bound by residues Asn-257 and Asp-266. Asp-266 lines the ATP pocket.

The protein belongs to the SELO family. Requires Mg(2+) as cofactor. It depends on Mn(2+) as a cofactor.

The enzyme catalyses L-seryl-[protein] + ATP = 3-O-(5'-adenylyl)-L-seryl-[protein] + diphosphate. The catalysed reaction is L-threonyl-[protein] + ATP = 3-O-(5'-adenylyl)-L-threonyl-[protein] + diphosphate. It carries out the reaction L-tyrosyl-[protein] + ATP = O-(5'-adenylyl)-L-tyrosyl-[protein] + diphosphate. It catalyses the reaction L-histidyl-[protein] + UTP = N(tele)-(5'-uridylyl)-L-histidyl-[protein] + diphosphate. The enzyme catalyses L-seryl-[protein] + UTP = O-(5'-uridylyl)-L-seryl-[protein] + diphosphate. The catalysed reaction is L-tyrosyl-[protein] + UTP = O-(5'-uridylyl)-L-tyrosyl-[protein] + diphosphate. Functionally, nucleotidyltransferase involved in the post-translational modification of proteins. It can catalyze the addition of adenosine monophosphate (AMP) or uridine monophosphate (UMP) to a protein, resulting in modifications known as AMPylation and UMPylation. This is Protein nucleotidyltransferase YdiU from Clostridium botulinum (strain 657 / Type Ba4).